The chain runs to 489 residues: Glutamate--tRNA ligase (489 aa).

The short motif at 11 to 21 is the 'HIGH' region element; that stretch reads PSPTGHLHIGG. Zn(2+)-binding residues include Cys-108, Cys-110, Cys-136, and His-138. The 'KMSKS' region motif lies at 253-257; that stretch reads KLSKR. Lys-256 contacts ATP.

The protein belongs to the class-I aminoacyl-tRNA synthetase family. Glutamate--tRNA ligase type 1 subfamily. Monomer. Zn(2+) serves as cofactor.

The protein resides in the cytoplasm. The enzyme catalyses tRNA(Glu) + L-glutamate + ATP = L-glutamyl-tRNA(Glu) + AMP + diphosphate. Functionally, catalyzes the attachment of glutamate to tRNA(Glu) in a two-step reaction: glutamate is first activated by ATP to form Glu-AMP and then transferred to the acceptor end of tRNA(Glu). The chain is Glutamate--tRNA ligase from Geobacillus thermodenitrificans (strain NG80-2).